The chain runs to 339 residues: Dipeptide transport system permease protein DppB (339 aa).

At 1–9 (MLQFILRRL) the chain is on the periplasmic side. A helical transmembrane segment spans residues 10–30 (GLVIPTFIGITLLTFAFVHMI). Over 31–102 (PGDPVMIMAG…VPRFQATLEL (72 aa)) the chain is Cytoplasmic. The ABC transmembrane type-1 domain maps to 96–328 (FQATLELGVC…LVNLLVDLLY (233 aa)). The chain crosses the membrane as a helical span at residues 103 to 123 (GVCAMIFATAVGIPVGVLAAV). Over 124–135 (KRGSIFDHTAVG) the chain is Periplasmic. Residues 136 to 156 (LALTGYSMPIFWWGMMLIMLV) traverse the membrane as a helical segment. Residues 157-171 (SVHWNLTPVSGRVSD) lie on the Cytoplasmic side of the membrane. Residues 172-192 (MVFLDDSNPLTGFMLIDTAIW) form a helical membrane-spanning segment. At 193-200 (GEDGNFID) the chain is on the periplasmic side. The chain crosses the membrane as a helical span at residues 201–221 (AVAHMILPAIVLGTIPLAVIV). At 222-259 (RMTRSSMLEVLGEDYIRTARAKGLTRMRVIIVHALRNA) the chain is on the cytoplasmic side. A helical membrane pass occupies residues 260–280 (MLPVVTVIGLQVGTLLAGAIL). The Periplasmic segment spans residues 281–309 (TETIFSWPGLGRWLIDALQRRDYPVVQGG). The chain crosses the membrane as a helical span at residues 310–330 (VLLVATMIILVNLLVDLLYGV). At 331–339 (VNPRIRHKK) the chain is on the cytoplasmic side.

It belongs to the binding-protein-dependent transport system permease family. OppBC subfamily. In terms of assembly, the complex is composed of two ATP-binding proteins (DppD and DppF), two transmembrane proteins (DppB and DppC) and a solute-binding protein (DppA).

It localises to the cell inner membrane. Functionally, part of the ABC transporter DppABCDF involved in dipeptide transport. Responsible for the translocation of the substrate across the membrane. The polypeptide is Dipeptide transport system permease protein DppB (dppB) (Escherichia coli O157:H7).